A 689-amino-acid chain; its full sequence is Glycine--tRNA ligase beta subunit (689 aa).

The protein belongs to the class-II aminoacyl-tRNA synthetase family. In terms of assembly, tetramer of two alpha and two beta subunits.

It localises to the cytoplasm. The enzyme catalyses tRNA(Gly) + glycine + ATP = glycyl-tRNA(Gly) + AMP + diphosphate. The sequence is that of Glycine--tRNA ligase beta subunit from Yersinia pseudotuberculosis serotype O:1b (strain IP 31758).